We begin with the raw amino-acid sequence, 464 residues long: Asparagine--tRNA ligase (464 aa).

The protein belongs to the class-II aminoacyl-tRNA synthetase family. As to quaternary structure, homodimer.

Its subcellular location is the cytoplasm. It carries out the reaction tRNA(Asn) + L-asparagine + ATP = L-asparaginyl-tRNA(Asn) + AMP + diphosphate + H(+). This Clostridium botulinum (strain Alaska E43 / Type E3) protein is Asparagine--tRNA ligase.